A 206-amino-acid polypeptide reads, in one-letter code: Small ribosomal subunit protein eS1 (206 aa).

It belongs to the eukaryotic ribosomal protein eS1 family.

The chain is Small ribosomal subunit protein eS1 from Methanocorpusculum labreanum (strain ATCC 43576 / DSM 4855 / Z).